We begin with the raw amino-acid sequence, 204 residues long: ATP phosphoribosyltransferase (204 aa).

Belongs to the ATP phosphoribosyltransferase family. Short subfamily. In terms of assembly, heteromultimer composed of HisG and HisZ subunits.

Its subcellular location is the cytoplasm. It catalyses the reaction 1-(5-phospho-beta-D-ribosyl)-ATP + diphosphate = 5-phospho-alpha-D-ribose 1-diphosphate + ATP. It functions in the pathway amino-acid biosynthesis; L-histidine biosynthesis; L-histidine from 5-phospho-alpha-D-ribose 1-diphosphate: step 1/9. Its function is as follows. Catalyzes the condensation of ATP and 5-phosphoribose 1-diphosphate to form N'-(5'-phosphoribosyl)-ATP (PR-ATP). Has a crucial role in the pathway because the rate of histidine biosynthesis seems to be controlled primarily by regulation of HisG enzymatic activity. In Staphylococcus epidermidis (strain ATCC 35984 / DSM 28319 / BCRC 17069 / CCUG 31568 / BM 3577 / RP62A), this protein is ATP phosphoribosyltransferase.